The primary structure comprises 409 residues: Pleckstrin homology domain-containing family O member 1 (409 aa).

The tract at residues 1–20 (MMKKNNSTKRGPQDGNHQCA) is disordered. Residues 21 to 132 (PPEKVGWVRK…WINALNSAIT (112 aa)) form the PH domain. Residues 133–193 (RAKNRVLDEV…MLTLDLIQEE (61 aa)) are interaction with capping proteins (CPs). Residues 136–308 (NRVLDEVTVE…PHAPGQLSRI (173 aa)) form an interaction with ATM, CKIP, IFP35 and NMI region. 3 disordered regions span residues 218–304 (LAGS…APGQ), 325–350 (EVQG…ESEQ), and 390–409 (TPDS…KSLM). Phosphoserine occurs at positions 227 and 271. The segment at 308–409 (IQDLVARKLE…QHSQYRKSLM (102 aa)) is negative regulator of AP-1 activity. Basic and acidic residues predominate over residues 331–340 (DGKRKAKEPP). Ser-342 is subject to Phosphoserine. Residues 390–402 (TPDSHLRQTTQHS) show a composition bias toward polar residues.

Heterodimer or homodimer. Interacts with CK2 and actin capping subunits (capping protein CP-alpha and CP-beta). CKIP1 and CK2 together inhibit the activity of actin capping protein at the barbed ends of actin filaments. Interacts with ATM, IFP35, JUN, JUND, NMI and PI3K. Interacts with AKT1, AKT2 and AKT3 (each isozyme of PKB), PtdIns(3,5)P2, PtdIns(4,5)P2 and PtdIns(3,4,5)P2. C-terminal fragments could be released during apoptosis via caspase-3-dependent cleavage.

Its subcellular location is the membrane. The protein resides in the nucleus. The protein localises to the cytoplasm. In terms of biological role, plays a role in the regulation of the actin cytoskeleton through its interactions with actin capping protein (CP). May function to target CK2 to the plasma membrane thereby serving as an adapter to facilitate the phosphorylation of CP by protein kinase 2 (CK2). Appears to target ATM to the plasma membrane. Also implicated in PI3K-regulated muscle differentiation, the regulation of AP-1 activity (plasma membrane bound AP-1 regulator that translocates to the nucleus) and the promotion of apoptosis induced by tumor necrosis factor TNF. When bound to PKB, it inhibits it probably by decreasing PKB level of phosphorylation. This is Pleckstrin homology domain-containing family O member 1 (PLEKHO1) from Bos taurus (Bovine).